The sequence spans 409 residues: Peptidase T (409 aa).

A Zn(2+)-binding site is contributed by His-78. The active site involves Asp-80. Asp-140 is a binding site for Zn(2+). The Proton acceptor role is filled by Glu-173. Glu-174, Asp-196, and His-379 together coordinate Zn(2+).

The protein belongs to the peptidase M20B family. The cofactor is Zn(2+).

It localises to the cytoplasm. It catalyses the reaction Release of the N-terminal residue from a tripeptide.. In terms of biological role, cleaves the N-terminal amino acid of tripeptides. The protein is Peptidase T of Salmonella dublin (strain CT_02021853).